Reading from the N-terminus, the 136-residue chain is Immunoglobulin J chain (136 aa).

3 disulfides stabilise this stretch: cysteine 12-cysteine 100, cysteine 71-cysteine 91, and cysteine 108-cysteine 133. Asparagine 48 carries N-linked (GlcNAc...) (complex) asparagine glycosylation.

Part of the secretory IgA (sIgA) complex that consists of two, four or five IgA monomers, and two additional non-Ig polypeptides, namely the JCHAIN and the secretory component (the proteolytic product of PIGR). Part of the secretory IgM (sIgM) complex that consist of five IgM monomers, and two additional non-Ig polypeptides, namely the JCHAIN and the secretory component (the proteolytic product of PIGR). JCHAIN-containing IgM interacts (via CH4 domain) with FCRM (via Ig-like domain).

It is found in the secreted. Serves to link two monomer units of either IgM or IgA. In the case of IgM, the J chain-joined dimer is a nucleating unit for the IgM pentamer, and in the case of IgA it induces dimers and/or larger polymers. It also helps to bind these immunoglobulins to secretory component. The polypeptide is Immunoglobulin J chain (Oryctolagus cuniculus (Rabbit)).